Reading from the N-terminus, the 393-residue chain is S-adenosylmethionine synthase (393 aa).

Glu9 lines the Mg(2+) pocket. ATP is bound at residue His15. Glu43 serves as a coordination point for K(+). Residues Glu56 and Gln99 each coordinate L-methionine. ATP is bound by residues 167–169 (DGK), 235–238 (SGRF), Asp246, 252–253 (RK), Ala269, Lys273, and Lys277. Asp246 is a binding site for L-methionine. Lys277 serves as a coordination point for L-methionine.

This sequence belongs to the AdoMet synthase family. As to quaternary structure, homotetramer. Requires Mn(2+) as cofactor. It depends on Mg(2+) as a cofactor. The cofactor is Co(2+). K(+) is required as a cofactor.

It is found in the cytoplasm. It carries out the reaction L-methionine + ATP + H2O = S-adenosyl-L-methionine + phosphate + diphosphate. It functions in the pathway amino-acid biosynthesis; S-adenosyl-L-methionine biosynthesis; S-adenosyl-L-methionine from L-methionine: step 1/1. Functionally, catalyzes the formation of S-adenosylmethionine from methionine and ATP. The reaction comprises two steps that are both catalyzed by the same enzyme: formation of S-adenosylmethionine (AdoMet) and triphosphate, and subsequent hydrolysis of the triphosphate. This is S-adenosylmethionine synthase (SAM) from Camellia sinensis (Tea plant).